Reading from the N-terminus, the 206-residue chain is Cytochrome c oxidase assembly protein CtaG (206 aa).

Residues 1 to 12 (MSKKPAGKNSNR) lie on the Cytoplasmic side of the membrane. Residues 13-35 (IVAAVCLAFFTGMIGMAYAAVPL) traverse the membrane as a helical; Signal-anchor for type II membrane protein segment. At 36–206 (YKMFCQATGY…ISDTEANLGG (171 aa)) the chain is on the periplasmic side. Residues 184–206 (VASSEPVQGTSKIISDTEANLGG) form a disordered region. A compositionally biased stretch (polar residues) spans 188–206 (EPVQGTSKIISDTEANLGG).

The protein belongs to the COX11/CtaG family.

It is found in the cell inner membrane. Its function is as follows. Exerts its effect at some terminal stage of cytochrome c oxidase synthesis, probably by being involved in the insertion of the copper B into subunit I. In Mesorhizobium japonicum (strain LMG 29417 / CECT 9101 / MAFF 303099) (Mesorhizobium loti (strain MAFF 303099)), this protein is Cytochrome c oxidase assembly protein CtaG.